The sequence spans 216 residues: U1 small nuclear ribonucleoprotein C (216 aa).

Residues 4–36 (FFCDYCDVYLTHDSMSVRKAHNSGRNHLRNVVD) form a Matrin-type zinc finger. Disordered regions lie at residues 70 to 89 (PQNQ…PGAG) and 125 to 216 (PGGI…ADKR). Composition is skewed to pro residues over residues 140 to 149 (PPMPPFPGMP) and 157 to 204 (GVPP…PPFG).

Belongs to the U1 small nuclear ribonucleoprotein C family. As to quaternary structure, U1 snRNP is composed of the 7 core Sm proteins B/B', D1, D2, D3, E, F and G that assemble in a heptameric protein ring on the Sm site of the small nuclear RNA to form the core snRNP, and at least 3 U1 snRNP-specific proteins U1-70K, U1-A and U1-C. U1-C interacts with U1 snRNA and the 5' splice-site region of the pre-mRNA.

The protein resides in the nucleus. Its function is as follows. Component of the spliceosomal U1 snRNP, which is essential for recognition of the pre-mRNA 5' splice-site and the subsequent assembly of the spliceosome. U1-C is directly involved in initial 5' splice-site recognition for both constitutive and regulated alternative splicing. The interaction with the 5' splice-site seems to precede base-pairing between the pre-mRNA and the U1 snRNA. Stimulates commitment or early (E) complex formation by stabilizing the base pairing of the 5' end of the U1 snRNA and the 5' splice-site region. This is U1 small nuclear ribonucleoprotein C from Neurospora crassa (strain ATCC 24698 / 74-OR23-1A / CBS 708.71 / DSM 1257 / FGSC 987).